Consider the following 26-residue polypeptide: uncharacterized protein (26 aa).

It is found in the plastid. Its subcellular location is the chloroplast. This is an uncharacterized protein from Trieres chinensis (Marine centric diatom).